The chain runs to 94 residues: Putative pterin-4-alpha-carbinolamine dehydratase (94 aa).

Belongs to the pterin-4-alpha-carbinolamine dehydratase family.

The catalysed reaction is (4aS,6R)-4a-hydroxy-L-erythro-5,6,7,8-tetrahydrobiopterin = (6R)-L-erythro-6,7-dihydrobiopterin + H2O. In Mycobacterium sp. (strain KMS), this protein is Putative pterin-4-alpha-carbinolamine dehydratase.